Here is a 1006-residue protein sequence, read N- to C-terminus: UPF0182 protein Arth_2749 (1006 aa).

Helical transmembrane passes span 18 to 38 (GALT…IFFA), 64 to 84 (IIIF…AIRI), 115 to 135 (VVMI…AASQ), 168 to 188 (FLGF…IAGI), 211 to 231 (QIHL…NFWL), 260 to 280 (SILA…AVIG), and 287 to 307 (IGTA…PWVI). Disordered stretches follow at residues 490 to 519 (GAPE…FTGN), 896 to 923 (KAGD…GGTD), and 975 to 1006 (LGSE…SPSN). Residues 495–509 (SPHREQDRPAGKEGD) show a composition bias toward basic and acidic residues. Low complexity-rich tracts occupy residues 911-923 (AGGS…GGTD) and 979-1000 (GASP…AATP).

Belongs to the UPF0182 family.

The protein localises to the cell membrane. In Arthrobacter sp. (strain FB24), this protein is UPF0182 protein Arth_2749.